Reading from the N-terminus, the 860-residue chain is Leucine--tRNA ligase (860 aa).

The 'HIGH' region motif lies at 42–52 (PYPSGRLHMGH). The 'KMSKS' region signature appears at 619-623 (KMSKS). Residue Lys622 coordinates ATP.

Belongs to the class-I aminoacyl-tRNA synthetase family.

The protein localises to the cytoplasm. It catalyses the reaction tRNA(Leu) + L-leucine + ATP = L-leucyl-tRNA(Leu) + AMP + diphosphate. This is Leucine--tRNA ligase from Shigella dysenteriae serotype 1 (strain Sd197).